The primary structure comprises 295 residues: Indole-3-glycerol phosphate synthase (295 aa).

Belongs to the TrpC family.

It carries out the reaction 1-(2-carboxyphenylamino)-1-deoxy-D-ribulose 5-phosphate + H(+) = (1S,2R)-1-C-(indol-3-yl)glycerol 3-phosphate + CO2 + H2O. Its pathway is amino-acid biosynthesis; L-tryptophan biosynthesis; L-tryptophan from chorismate: step 4/5. This Prochlorococcus marinus (strain NATL2A) protein is Indole-3-glycerol phosphate synthase.